The primary structure comprises 231 residues: Thiamine import ATP-binding protein ThiQ (231 aa).

The ABC transporter domain occupies 2–230; that stretch reads LRLEDLDIRK…PPPALRGYLG (229 aa). 32–39 is an ATP binding site; that stretch reads GPSGAGKS.

Belongs to the ABC transporter superfamily. Thiamine importer (TC 3.A.1.19.1) family. In terms of assembly, the complex is composed of two ATP-binding proteins (ThiQ), two transmembrane proteins (ThiP) and a solute-binding protein (ThiB).

It localises to the cell inner membrane. The enzyme catalyses thiamine(out) + ATP + H2O = thiamine(in) + ADP + phosphate + H(+). In terms of biological role, part of the ABC transporter complex ThiBPQ involved in thiamine import. Responsible for energy coupling to the transport system. The protein is Thiamine import ATP-binding protein ThiQ of Ruegeria sp. (strain TM1040) (Silicibacter sp.).